A 338-amino-acid chain; its full sequence is Malate dehydrogenase, mitochondrial (338 aa).

The transit peptide at 1-24 directs the protein to the mitochondrion; the sequence is MLSALARPASAALRRSFSTSAQNN. Residues 31-37 and Asp-57 each bind NAD(+); that span reads GASGGIG. Ser-33 carries an O-linked (GlcNAc) serine glycan. An N6-acetyllysine; alternate mark is found at Lys-78 and Lys-91. N6-succinyllysine; alternate occurs at positions 78 and 91. Substrate-binding residues include Arg-104 and Arg-110. Residues Asn-117 and 140–142 contribute to the NAD(+) site; that span reads IAN. Asn-142 is a binding site for substrate. Lys-165 carries the N6-acetyllysine modification. Arg-176 provides a ligand contact to substrate. An N6-acetyllysine; alternate modification is found at Lys-185. Lys-185 is modified (N6-succinyllysine; alternate). Catalysis depends on His-200, which acts as the Proton acceptor. Position 203 is an N6-succinyllysine (Lys-203). An N6-acetyllysine; alternate mark is found at Lys-215 and Lys-239. N6-succinyllysine; alternate occurs at positions 215 and 239. Lys-239 bears the N6-malonyllysine; alternate mark. Residue Ser-246 is modified to Phosphoserine. Met-251 is an NAD(+) binding site. Residue Lys-269 is modified to N6-succinyllysine. Residues Lys-296, Lys-301, Lys-314, and Lys-324 each carry the N6-acetyllysine; alternate modification. Lys-296, Lys-301, Lys-314, and Lys-324 each carry N6-succinyllysine; alternate. Position 326 is a phosphoserine (Ser-326). 3 positions are modified to N6-acetyllysine; alternate: Lys-328, Lys-329, and Lys-335. N6-succinyllysine; alternate is present on Lys-328. Lys-329 carries the post-translational modification N6-malonyllysine; alternate. Lys-335 carries the N6-succinyllysine; alternate modification.

The protein belongs to the LDH/MDH superfamily. MDH type 1 family. In terms of assembly, homodimer. In terms of processing, acetylation is enhanced after treatment either with trichostin A (TCA) or with nicotinamide (NAM) with the appearance of tri- and tetraacetylations. Glucose also increases acetylation.

It is found in the mitochondrion matrix. It carries out the reaction (S)-malate + NAD(+) = oxaloacetate + NADH + H(+). Its activity is regulated as follows. Enzyme activity is enhanced by acetylation. This is Malate dehydrogenase, mitochondrial (MDH2) from Macaca fascicularis (Crab-eating macaque).